Consider the following 279-residue polypeptide: PHO85 cyclin-1 (279 aa).

The region spanning 19-152 (DIIKFLTDTT…LLQLLNWDLR (134 aa)) is the Cyclin N-terminal domain. Residues 29-36 (LRVVPSSN) are required for degradation by DMA1. Thr-39 bears the Phosphothreonine; by PHO85 mark. Ser-43 carries the post-translational modification Phosphoserine; by PHO85. Glycyl lysine isopeptide (Lys-Gly) (interchain with G-Cter in ubiquitin) cross-links involve residues Lys-82 and Lys-121.

Belongs to the cyclin family. PCL1,2 subfamily. Forms a cyclin-CDK complex with PHO85. Interacts with HMS1, NCP1 and NPA3. Interacts with DMA1. Post-translationally, phosphorylated by PHO85; necessary for interaction with DMA1 and subsequent degradation. Ubiquitinated by E3 ubiquitin ligase DMA1 in response to nutrient condition; this targets PCL1 for destruction.

It is found in the cytoplasm. The protein resides in the nucleus. G1/S-specific cyclin partner of the cyclin-dependent kinase (CDK) PHO85. Essential for the control of the cell cycle at the G1/S (start) transition. The PCL1-PHO85 cyclin-CDK holoenzyme is involved in phosphorylation of the CDK inhibitor (CKI) SIC1, which is required for its ubiquitination and degradation, releasing repression of b-type cyclins and promoting exit from mitosis. Together with cyclin PCL2, positively controls degradation of sphingoid long chain base kinase LCB4. PCL1-PHO85 phosphorylates LCB4, which is required for its ubiquitination and degradation. PCL1-PHO85 also phosphorylates HMS1, NCP1 and NPA3, which may all have a role in mitotic exit. In Saccharomyces cerevisiae (strain ATCC 204508 / S288c) (Baker's yeast), this protein is PHO85 cyclin-1.